We begin with the raw amino-acid sequence, 487 residues long: Glutamyl-tRNA(Gln) amidotransferase subunit A (487 aa).

Catalysis depends on charge relay system residues Lys-77 and Ser-152. The active-site Acyl-ester intermediate is the Ser-176.

The protein belongs to the amidase family. GatA subfamily. In terms of assembly, heterotrimer of A, B and C subunits.

The enzyme catalyses L-glutamyl-tRNA(Gln) + L-glutamine + ATP + H2O = L-glutaminyl-tRNA(Gln) + L-glutamate + ADP + phosphate + H(+). Functionally, allows the formation of correctly charged Gln-tRNA(Gln) through the transamidation of misacylated Glu-tRNA(Gln) in organisms which lack glutaminyl-tRNA synthetase. The reaction takes place in the presence of glutamine and ATP through an activated gamma-phospho-Glu-tRNA(Gln). The protein is Glutamyl-tRNA(Gln) amidotransferase subunit A of Lactiplantibacillus plantarum (strain ATCC BAA-793 / NCIMB 8826 / WCFS1) (Lactobacillus plantarum).